Here is a 919-residue protein sequence, read N- to C-terminus: Alpha-amylase (919 aa).

The signal sequence occupies residues 1–33 (MPATRRTARVRRVAAVTVTALAAALLPPLAARA). Asn182 and Asp281 together coordinate Ca(2+). The active-site Nucleophile is the Asp312. His316 lines the Ca(2+) pocket. Glu346 acts as the Proton donor in catalysis. The segment at 704–729 (ASGRLHHRHPARRGGAHRRLPGPRGR) is disordered. Basic residues predominate over residues 707-724 (RLHHRHPARRGGAHRRLP).

This sequence belongs to the glycosyl hydrolase 13 family. In terms of assembly, monomer. The cofactor is Ca(2+).

The protein resides in the secreted. The enzyme catalyses Endohydrolysis of (1-&gt;4)-alpha-D-glucosidic linkages in polysaccharides containing three or more (1-&gt;4)-alpha-linked D-glucose units.. The sequence is that of Alpha-amylase (amy) from Streptomyces lividans.